We begin with the raw amino-acid sequence, 26 residues long: Oxyopinin-3a (26 aa).

In terms of tissue distribution, expressed by the venom gland.

It is found in the secreted. Its function is as follows. May have cytolytic and antimicrobial activity. This chain is Oxyopinin-3a, found in Oxyopes takobius (Lynx spider).